A 121-amino-acid polypeptide reads, in one-letter code: Large ribosomal subunit protein bL12 (121 aa).

This sequence belongs to the bacterial ribosomal protein bL12 family. As to quaternary structure, homodimer. Part of the ribosomal stalk of the 50S ribosomal subunit. Forms a multimeric L10(L12)X complex, where L10 forms an elongated spine to which 2 to 4 L12 dimers bind in a sequential fashion. Binds GTP-bound translation factors.

Its function is as follows. Forms part of the ribosomal stalk which helps the ribosome interact with GTP-bound translation factors. Is thus essential for accurate translation. The sequence is that of Large ribosomal subunit protein bL12 from Pseudomonas putida (strain GB-1).